The primary structure comprises 149 residues: MSQTHRILLLNGPNLNMLGAREPKHYGSISLESIEEKIQTLATQHNVKVECFQANSEEKLINKIHESFQQVDFILINPAAYTHTSVALRDALLAVSIPFVEIHLSNVHKREPFRHHSYFSDVAEGVICGLGAKGYEFAFLFAMDYLAKK.

Catalysis depends on Tyr26, which acts as the Proton acceptor. Substrate is bound by residues Asn77, His83, and Asp90. His103 acts as the Proton donor in catalysis. Substrate-binding positions include Leu104–Ser105 and Arg114.

The protein belongs to the type-II 3-dehydroquinase family. As to quaternary structure, homododecamer.

It catalyses the reaction 3-dehydroquinate = 3-dehydroshikimate + H2O. Its pathway is metabolic intermediate biosynthesis; chorismate biosynthesis; chorismate from D-erythrose 4-phosphate and phosphoenolpyruvate: step 3/7. Its function is as follows. Catalyzes a trans-dehydration via an enolate intermediate. In Haemophilus influenzae (strain PittGG), this protein is 3-dehydroquinate dehydratase.